Reading from the N-terminus, the 362-residue chain is E3 ubiquitin-protein ligase rififylin (362 aa).

Residues glutamate 17 to phenylalanine 37 are disordered. The segment covering alanine 24–phenylalanine 37 has biased composition (polar residues). Residues threonine 41 to alanine 93 form an FYVE-type zinc finger. Positions leucine 101–threonine 120 constitute an SAP 1 domain. A disordered region spans residues leucine 162–glutamine 183. Phosphoserine occurs at positions 225, 228, 231, and 239. The SAP 2 domain maps to isoleucine 249–arginine 263. The segment at cysteine 315 to arginine 350 adopts an RING-type zinc-finger fold.

Interacts with CASP8 and CASP10. Interacts with RIPK1 (via protein kinase domain); involved in RIPK1 ubiquitination. Interacts with PRR5L. Interacts (via RING-type zinc finger) with p53/TP53; involved in p53/TP53 ubiquitination. Interacts (via RING-type zinc finger) with MDM2; the interaction stabilizes MDM2. Autoubiquitinated. In terms of processing, palmitoylated. Post-translationally, undergoes caspase-mediated cleavage upon death-receptor activation, by TNFSF10 for instance. May be mediated by the caspases CASP8 and CASP10 in a negative feedback loop. Ubiquitous. Detected in cerebrum, cerebellum, midbrain, brain stem, hippocampus, striatum, liver, heart, lung, kidney, muscle, spleen and testis.

The protein localises to the cytoplasm. The protein resides in the cytosol. It localises to the cell membrane. It is found in the recycling endosome membrane. It carries out the reaction S-ubiquitinyl-[E2 ubiquitin-conjugating enzyme]-L-cysteine + [acceptor protein]-L-lysine = [E2 ubiquitin-conjugating enzyme]-L-cysteine + N(6)-ubiquitinyl-[acceptor protein]-L-lysine.. Its pathway is protein modification; protein ubiquitination. Functionally, E3 ubiquitin-protein ligase that regulates several biological processes through the ubiquitin-mediated proteasomal degradation of various target proteins. Mediates 'Lys-48'-linked polyubiquitination of PRR5L and its subsequent proteasomal degradation thereby indirectly regulating cell migration through the mTORC2 complex. Also ubiquitinates the caspases CASP8 and CASP10, promoting their proteasomal degradation, to negatively regulate apoptosis downstream of death domain receptors. Also negatively regulates the tumor necrosis factor-mediated signaling pathway through targeting of RIPK1 to ubiquitin-mediated proteasomal degradation. Negatively regulates p53/TP53 through its direct ubiquitination and targeting to proteasomal degradation. Indirectly, may also negatively regulate p53/TP53 through ubiquitination and degradation of SFN. May also play a role in endocytic recycling. This is E3 ubiquitin-protein ligase rififylin from Rattus norvegicus (Rat).